A 377-amino-acid chain; its full sequence is Cobalt-precorrin-5B C(1)-methyltransferase (377 aa).

Belongs to the CbiD family.

It carries out the reaction Co-precorrin-5B + S-adenosyl-L-methionine = Co-precorrin-6A + S-adenosyl-L-homocysteine. It participates in cofactor biosynthesis; adenosylcobalamin biosynthesis; cob(II)yrinate a,c-diamide from sirohydrochlorin (anaerobic route): step 6/10. Functionally, catalyzes the methylation of C-1 in cobalt-precorrin-5B to form cobalt-precorrin-6A. The polypeptide is Cobalt-precorrin-5B C(1)-methyltransferase (Alkaliphilus metalliredigens (strain QYMF)).